Reading from the N-terminus, the 362-residue chain is Chorismate synthase (362 aa).

2 residues coordinate NADP(+): Arg-48 and Arg-54. Residues Arg-125–Ser-127, Asn-238–Ala-239, Gly-286, Lys-301–Ser-305, and Arg-327 contribute to the FMN site.

The protein belongs to the chorismate synthase family. Homotetramer. FMNH2 serves as cofactor.

It carries out the reaction 5-O-(1-carboxyvinyl)-3-phosphoshikimate = chorismate + phosphate. It functions in the pathway metabolic intermediate biosynthesis; chorismate biosynthesis; chorismate from D-erythrose 4-phosphate and phosphoenolpyruvate: step 7/7. Its function is as follows. Catalyzes the anti-1,4-elimination of the C-3 phosphate and the C-6 proR hydrogen from 5-enolpyruvylshikimate-3-phosphate (EPSP) to yield chorismate, which is the branch point compound that serves as the starting substrate for the three terminal pathways of aromatic amino acid biosynthesis. This reaction introduces a second double bond into the aromatic ring system. The sequence is that of Chorismate synthase from Granulibacter bethesdensis (strain ATCC BAA-1260 / CGDNIH1).